The following is a 374-amino-acid chain: Peptide chain release factor 2 (374 aa).

Gln-252 is modified (N5-methylglutamine).

The protein belongs to the prokaryotic/mitochondrial release factor family. In terms of processing, methylated by PrmC. Methylation increases the termination efficiency of RF2.

It is found in the cytoplasm. In terms of biological role, peptide chain release factor 2 directs the termination of translation in response to the peptide chain termination codons UGA and UAA. The chain is Peptide chain release factor 2 from Xanthomonas euvesicatoria pv. vesicatoria (strain 85-10) (Xanthomonas campestris pv. vesicatoria).